A 239-amino-acid polypeptide reads, in one-letter code: Probable transcriptional regulatory protein MG332 (239 aa).

It belongs to the TACO1 family.

It localises to the cytoplasm. This is Probable transcriptional regulatory protein MG332 from Mycoplasma genitalium (strain ATCC 33530 / DSM 19775 / NCTC 10195 / G37) (Mycoplasmoides genitalium).